Consider the following 460-residue polypeptide: MSQILTSRQADELHRALIAYLTAANLPNTAAALREELNLGEDVFDPATAKKYEGLLEKKWTSVVRLQKKSLTPLVTQIMDLESRNHILQSELDNATPTSRQNKDPVAWLPRAPPRHTLQSHRDPITCVAFHPVFSSLASGSEDQTIKIWDWELGELERTIKGHTKAVLDVDYGGPRGNTLLASCSSDLTIKLWDPLDSYKNIRTLPGHDHSVSAVRFIPGSGNLLVSASRDKTLRIWDVSTGYCVKTLRGHAEWVRDVCPSFDGKYILSTSDDYTSRLWDVTVTNPEPRVTLIGHEHVVLCCAIAPPAAYQNLAAMAGIKKPPATSSAEFMATGSRDKSIRLWDARGTCIKTLAGHDNWVRGLVFHPGGKYLLSVSDDKTLRCWDLTQEGKCVKTIGDAHGHFVQCIRWAPSVIKDVSVNGDNGEPNGTPKKGAAVTPDSQIRCVIATGSVDLNVRIFAN.

In terms of domain architecture, LisH spans 9 to 41; sequence QADELHRALIAYLTAANLPNTAAALREELNLGE. The stretch at 74 to 96 forms a coiled coil; the sequence is LVTQIMDLESRNHILQSELDNAT. Residues 90–100 show a composition bias toward polar residues; sequence SELDNATPTSR. Residues 90 to 115 are disordered; it reads SELDNATPTSRQNKDPVAWLPRAPPR. WD repeat units follow at residues 120–161, 163–203, 207–247, 250–289, 294–354, 355–394, 399–439, and 441–460; these read SHRD…RTIK, HTKA…KNIR, GHDH…CVKT, GHAE…PEPR, GHEH…KTLA, GHDN…KCVK, AHGH…VTPD, and QIRC…IFAN.

It belongs to the WD repeat LIS1/nudF family. In terms of assembly, self-associates. Interacts with NDL1 and dynein.

The protein localises to the cytoplasm. It localises to the cytoskeleton. It is found in the spindle pole. Its function is as follows. Positively regulates the activity of the minus-end directed microtubule motor protein dynein. May enhance dynein-mediated microtubule sliding by targeting dynein to the microtubule plus end. Required for nuclear migration during vegetative growth as well as development. Required for retrograde early endosome (EE) transport from the hyphal tip. Required for localization of dynein to the mitotic spindle poles. Recruits additional proteins to the dynein complex at SPBs. In Sordaria macrospora (strain ATCC MYA-333 / DSM 997 / K(L3346) / K-hell), this protein is Nuclear distribution protein PAC1-1.